A 498-amino-acid chain; its full sequence is MSDQSEYKISKDDEHSIYASEINKEKLQNTASPDVDYGDTASLKIDPKVEKKLLLKMDLVISPIIGFLYLMAFLDRSNIGNAAVAGMTEALSLYGERLNVAVSIFYVLYILVETPSVVLVKRIKASRMLAFISFAWSMTVLFSGFMSSYGGLIATRLILGLLEGCLFPALNLYLTTHYTRKEQCQRLSYLFASAGLAGAFGGLFAYALEQVHAGNKEGWQWIYIVEGLVSFIGVPLCLFALPDKMENAWFLTREEREVAIIRRDINARYHGEQHFEWSEVRKAFKDPKVYVSATSQFCADMVLYGFSSFLPVIIKGLGFVGLQTNYMTIPVYIAGVISFLFVAWLSDRTQLRAVYLISASTVVAVGYIIMLASDSNAAKYTATYIIAIGCYIGPGLNLGWLNNNVAGHYKRATAIGIQQTLANSSGIVAGQIYRSKNAPKYILGNAFTLGCVIVGGLAYVVMFFSLRYVNKKRDERCARGEFDPSAIGDFADDFRYYL.

The next 11 membrane-spanning stretches (helical) occupy residues 54-74, 100-120, 128-148, 150-170, 188-208, 221-241, 302-322, 326-346, 353-373, 381-401, and 446-466; these read LLKM…MAFL, VAVS…VVLV, MLAF…FMSS, GGLI…FPAL, SYLF…AYAL, WIYI…LFAL, VLYG…FVGL, YMTI…AWLS, AVYL…MLAS, TATY…LGWL, and AFTL…FFSL.

This sequence belongs to the major facilitator superfamily. Allantoate permease family.

It is found in the membrane. This is an uncharacterized protein from Schizosaccharomyces pombe (strain 972 / ATCC 24843) (Fission yeast).